A 222-amino-acid chain; its full sequence is DNA-directed RNA polymerase V subunit 5A (222 aa).

The protein belongs to the archaeal Rpo5/eukaryotic RPB5 RNA polymerase subunit family. In terms of assembly, component of the RNA polymerase V complex. As to expression, expressed in roots, leaves, siliques and seeds, and to a lower level, in flower buds and flowers.

The protein localises to the nucleus. Functionally, DNA-dependent RNA polymerase catalyzes the transcription of DNA into RNA using the four ribonucleoside triphosphates as substrates. Component of RNA polymerase V involved in RNA-directed DNA methylation-dependent (RdDM) silencing of endogenous repeated sequences, including transposable elements. Required for establishment of DNA methylation. The polypeptide is DNA-directed RNA polymerase V subunit 5A (NRPE5A) (Arabidopsis thaliana (Mouse-ear cress)).